A 261-amino-acid polypeptide reads, in one-letter code: 2-phytyl-1,4-beta-naphthoquinone methyltransferase, chloroplastic (261 aa).

The transit peptide at 1–30 (MAALLGIVSPVTFTGKHPVNSRSRRRTVVK) directs the protein to the chloroplast.

The protein belongs to the class I-like SAM-binding methyltransferase superfamily. MenG/UbiE family.

It localises to the plastid. The protein resides in the chloroplast. It carries out the reaction demethylphylloquinol + S-adenosyl-L-methionine = phylloquinol + S-adenosyl-L-homocysteine + H(+). In terms of biological role, involved in the biosynthesis of phylloquinone (vitamin K1). Methyltransferase required for the conversion of 2-phytyl-1,4-beta-naphthoquinol to phylloquinol. This is 2-phytyl-1,4-beta-naphthoquinone methyltransferase, chloroplastic from Arabidopsis thaliana (Mouse-ear cress).